A 1384-amino-acid chain; its full sequence is DNA-directed RNA polymerase subunit beta (1384 aa).

It belongs to the RNA polymerase beta chain family. In terms of assembly, the RNAP catalytic core consists of 2 alpha, 1 beta, 1 beta' and 1 omega subunit. When a sigma factor is associated with the core the holoenzyme is formed, which can initiate transcription.

The catalysed reaction is RNA(n) + a ribonucleoside 5'-triphosphate = RNA(n+1) + diphosphate. Its function is as follows. DNA-dependent RNA polymerase catalyzes the transcription of DNA into RNA using the four ribonucleoside triphosphates as substrates. In Stenotrophomonas maltophilia (strain R551-3), this protein is DNA-directed RNA polymerase subunit beta.